We begin with the raw amino-acid sequence, 599 residues long: CAP-Gly domain-containing linker protein 4 (599 aa).

ANK repeat units lie at residues 65-101 (TSVSELFAILRQWVPQVQQNIDIIGNEILKRGCNVND), 149-180 (TNMNALHYASYFDVPELIRVLLKTSKPKDVDA), and 186-215 (NFGTALHIAAHNLCAGAVKTLLELGANPAF). A CAP-Gly 1 domain is found at 303-345 (GTTEFASGQWAGIELDEPEGKNNGSVGRVQYFKCAPKYGIFAP). The tract at residues 387–482 (SGLMTSKKEN…TSAANNTHRE (96 aa)) is disordered. The span at 443-462 (LSTSSSSGKKTLSKSPSLPS) shows a compositional bias: low complexity. Over residues 468–478 (LKSSTTSAANN) the composition is skewed to polar residues. The 43-residue stretch at 505–547 (GTTNFAPGYWYGIELEKPHGKNDGSVGGVQYFSCSPRYGIFAP) folds into the CAP-Gly 2 domain. Ser557 carries the phosphoserine modification. Positions 565–599 (SSNKQNHSYPGFRRSFSTTSASSQKEINRRNAFAK) are disordered. The segment covering 576 to 587 (FRRSFSTTSASS) has biased composition (low complexity).

This is CAP-Gly domain-containing linker protein 4 (Clip4) from Rattus norvegicus (Rat).